The following is a 416-amino-acid chain: Phosphoribosylamine--glycine ligase (416 aa).

An ATP-grasp domain is found at 105–310 (KSFLKKYRIK…PLELILAATQ (206 aa)). 131–192 (IYSLTPPIVV…EEFLDGYELS (62 aa)) provides a ligand contact to ATP. Glu-281 and Asn-283 together coordinate Mg(2+).

It belongs to the GARS family. Requires Mg(2+) as cofactor. Mn(2+) serves as cofactor.

It catalyses the reaction 5-phospho-beta-D-ribosylamine + glycine + ATP = N(1)-(5-phospho-beta-D-ribosyl)glycinamide + ADP + phosphate + H(+). It functions in the pathway purine metabolism; IMP biosynthesis via de novo pathway; N(1)-(5-phospho-D-ribosyl)glycinamide from 5-phospho-alpha-D-ribose 1-diphosphate: step 2/2. The sequence is that of Phosphoribosylamine--glycine ligase from Campylobacter jejuni subsp. jejuni serotype O:2 (strain ATCC 700819 / NCTC 11168).